The following is a 302-amino-acid chain: Aspartate carbamoyltransferase catalytic subunit (302 aa).

Carbamoyl phosphate contacts are provided by Arg-53 and Thr-54. Lys-82 lines the L-aspartate pocket. Arg-103, His-131, and Gln-134 together coordinate carbamoyl phosphate. 2 residues coordinate L-aspartate: Arg-164 and Arg-223. Positions 260 and 261 each coordinate carbamoyl phosphate.

Belongs to the aspartate/ornithine carbamoyltransferase superfamily. ATCase family. As to quaternary structure, heterooligomer of catalytic and regulatory chains.

It carries out the reaction carbamoyl phosphate + L-aspartate = N-carbamoyl-L-aspartate + phosphate + H(+). The protein operates within pyrimidine metabolism; UMP biosynthesis via de novo pathway; (S)-dihydroorotate from bicarbonate: step 2/3. Catalyzes the condensation of carbamoyl phosphate and aspartate to form carbamoyl aspartate and inorganic phosphate, the committed step in the de novo pyrimidine nucleotide biosynthesis pathway. In Methanococcus maripaludis (strain C5 / ATCC BAA-1333), this protein is Aspartate carbamoyltransferase catalytic subunit.